The following is a 114-amino-acid chain: uncharacterized protein (114 aa).

The protein to M.jannaschii MJ0310 and MJ0714.

This is an uncharacterized protein from Methanocaldococcus jannaschii (strain ATCC 43067 / DSM 2661 / JAL-1 / JCM 10045 / NBRC 100440) (Methanococcus jannaschii).